A 216-amino-acid polypeptide reads, in one-letter code: Phosphoenolpyruvate guanylyltransferase (216 aa).

The phosphoenolpyruvate site is built by Thr-143, Gly-159, and Ser-162.

It belongs to the CofC family.

The enzyme catalyses phosphoenolpyruvate + GTP + H(+) = enolpyruvoyl-2-diphospho-5'-guanosine + diphosphate. It functions in the pathway cofactor biosynthesis; coenzyme F420 biosynthesis. In terms of biological role, guanylyltransferase that catalyzes the activation of phosphoenolpyruvate (PEP) as enolpyruvoyl-2-diphospho-5'-guanosine, via the condensation of PEP with GTP. It is involved in the biosynthesis of coenzyme F420, a hydride carrier cofactor. The sequence is that of Phosphoenolpyruvate guanylyltransferase from Streptomyces scabiei (strain 87.22).